A 299-amino-acid polypeptide reads, in one-letter code: Acetylglutamate kinase (299 aa).

Residues 70 to 71, arginine 92, and asparagine 186 contribute to the substrate site; that span reads GG.

It belongs to the acetylglutamate kinase family. ArgB subfamily.

The protein localises to the cytoplasm. It catalyses the reaction N-acetyl-L-glutamate + ATP = N-acetyl-L-glutamyl 5-phosphate + ADP. It functions in the pathway amino-acid biosynthesis; L-arginine biosynthesis; N(2)-acetyl-L-ornithine from L-glutamate: step 2/4. Functionally, catalyzes the ATP-dependent phosphorylation of N-acetyl-L-glutamate. This chain is Acetylglutamate kinase, found in Caldanaerobacter subterraneus subsp. tengcongensis (strain DSM 15242 / JCM 11007 / NBRC 100824 / MB4) (Thermoanaerobacter tengcongensis).